The primary structure comprises 621 residues: MEIVSRAWESVDWDRIQTRVEAEVTALGQRQDDSEIRKTRLVEESNAYRGRTNKDSRKVAIPLIKAFQSEFDGLLARSTAAENALIDICKSIVSLPDPKSLLKGAEAWKNDAEKTQKAVEEREELKRQLIKVNNELEDLRGKDVKVRKLKDKLAKLESEQDIFIENAVNEVEKKAEQELNDRLTELIAEKEKMKEQNEILEKNMDSLESKNKDIQRKLEIAKQTVEQKDGLENEQLSIAMKDLADAKHKIVFLEERVSQLENEAEKVNESKKAGNIEDIAALGSVLVQKDDVIQQLTNDIKRHEASHVEELAKWKLAVSAVEKKNKTLIGELNELKNQLESRNDYEAIKNELRLLREIEFGDSAEANAESIERLGETVETLDRLLAEKNRRLQNENASLRVANDGFKGRNEEQEAELTVLKEKSERNDRLIAQLEADLASAVQDIGIPERMGTNEMLKDAPAPTISDASLVPILTSQRNRLHERVTSLEEAISLEKTKQLSVQNEIERVREENIRLCERIRFLQSPGGQQQANVEAGLGNDFRNGNRNKKVSLHDKTTLNMGRAILATPKSRTVFFSYLLILHALIMLVLYKFAFDQSVVRDAETECEYKFHQHMLDNHKQ.

Over 1-574 the chain is Cytoplasmic; it reads MEIVSRAWES…ILATPKSRTV (574 aa). 2 coiled-coil regions span residues 101-445 and 473-525; these read LLKG…VQDI and ILTS…FLQS. A helical; Anchor for type IV membrane protein membrane pass occupies residues 575–595; it reads FFSYLLILHALIMLVLYKFAF. Residues 596–621 lie on the Lumenal side of the membrane; that stretch reads DQSVVRDAETECEYKFHQHMLDNHKQ.

The protein belongs to the CASP family.

It localises to the golgi apparatus membrane. In terms of biological role, may be involved in intra-Golgi retrograde transport. The sequence is that of Protein CASP (ceh-44) from Caenorhabditis elegans.